The primary structure comprises 185 residues: Potassium-transporting ATPase KdpC subunit (185 aa).

A helical membrane pass occupies residues 8 to 28 (LGLVLIMFVLCGFIFPLTVTA). A disordered region spans residues 113-132 (GQKLSSDAVTTSGSGLDPDI). Polar residues predominate over residues 114–126 (QKLSSDAVTTSGS).

Belongs to the KdpC family. As to quaternary structure, the system is composed of three essential subunits: KdpA, KdpB and KdpC.

It localises to the cell membrane. Part of the high-affinity ATP-driven potassium transport (or Kdp) system, which catalyzes the hydrolysis of ATP coupled with the electrogenic transport of potassium into the cytoplasm. This subunit acts as a catalytic chaperone that increases the ATP-binding affinity of the ATP-hydrolyzing subunit KdpB by the formation of a transient KdpB/KdpC/ATP ternary complex. This is Potassium-transporting ATPase KdpC subunit from Staphylococcus haemolyticus (strain JCSC1435).